The primary structure comprises 64 residues: Conotoxin reg3k (64 aa).

Positions 1 to 20 are cleaved as a signal peptide; it reads MMFKLGVLLTICLLLFPLTA. Positions 21 to 48 are excised as a propeptide; that stretch reads LQLDWDQPGDHMLDISSEIDDRWFDPVR. 3 cysteine pairs are disulfide-bonded: Cys50-Cys60, Cys51-Cys58, and Cys56-Cys61. The residue at position 59 (Pro59) is a 4-hydroxyproline.

In terms of tissue distribution, expressed by the venom duct.

The protein resides in the secreted. This Conus regius (Crown cone) protein is Conotoxin reg3k.